The primary structure comprises 441 residues: Keratin, type I cytoskeletal 17 (441 aa).

The disordered stretch occupies residues 1–23; the sequence is MTTTIRHFSSGSIKGSSGLAGGS. Residues 1 to 91 form a head region; that stretch reads MTTTIRHFSS…GGVDGLLVGG (91 aa). Over residues 9 to 23 the composition is skewed to low complexity; the sequence is SSGSIKGSSGLAGGS. At serine 12 the chain carries Phosphoserine. Lysine 14 participates in a covalent cross-link: Glycyl lysine isopeptide (Lys-Gly) (interchain with G-Cter in SUMO1); alternate. Residue lysine 14 forms a Glycyl lysine isopeptide (Lys-Gly) (interchain with G-Cter in SUMO2); alternate linkage. Phosphoserine occurs at positions 24, 30, 32, and 37. Position 42 is a phosphoserine; by RPS6KA1 (serine 42). Positions 92-128 are coil 1A; the sequence is EKATMQNLNDRLASYLDKVRALEEANTELELKIRDWY. One can recognise an IF rod domain in the interval 92-403; that stretch reads EKATMQNLND…RLLEGEDAHL (312 aa). Threonine 118 bears the Phosphothreonine mark. The segment at 129–146 is linker 1; it reads QKQAPGPAPDYSSYFKTI. A coil 1B region spans residues 147–238; the sequence is EDLRNKIHTA…NHEEEMKALR (92 aa). Positions 239-258 are linker 12; it reads GQVGGEINVEMDAAPGVDLS. A coil 2 region spans residues 259–400; it reads RILNEMRDQY…TYRRLLEGED (142 aa). A Glycyl lysine isopeptide (Lys-Gly) (interchain with G-Cter in SUMO2) cross-link involves residue lysine 286. At threonine 287 the chain carries Phosphothreonine. Phosphoserine is present on serine 331. Residues 401-441 are tail; that stretch reads AHLTQYKTKEPVTTRQVRTIVEEVQDGRVISSREQVHQTSH. Glycyl lysine isopeptide (Lys-Gly) (interchain with G-Cter in SUMO1); alternate cross-links involve residues lysine 407 and lysine 409. Residues lysine 407 and lysine 409 each participate in a glycyl lysine isopeptide (Lys-Gly) (interchain with G-Cter in SUMO2); alternate cross-link.

The protein belongs to the intermediate filament family. Heterodimer of a type I and a type II keratin. KRT17 associates with KRT6 isomers (KRT6A or KRT6B). Interacts with TRADD and SFN. Phosphorylation at Ser-42 occurs in a growth- and stress-dependent fashion in skin keratinocytes, it has no effect on filament organization.

It localises to the cytoplasm. In terms of biological role, type I keratin involved in the formation and maintenance of various skin appendages, specifically in determining shape and orientation of hair. Required for the correct growth of hair follicles, in particular for the persistence of the anagen (growth) state. Modulates the function of TNF-alpha in the specific context of hair cycling. Regulates protein synthesis and epithelial cell growth through binding to the adapter protein SFN and by stimulating Akt/mTOR pathway. Involved in tissue repair. May be a marker of basal cell differentiation in complex epithelia and therefore indicative of a certain type of epithelial 'stem cells'. Acts as a promoter of epithelial proliferation by acting a regulator of immune response in skin: promotes Th1/Th17-dominated immune environment contributing to the development of basaloid skin tumors. May act as an autoantigen in the immunopathogenesis of psoriasis, with certain peptide regions being a major target for autoreactive T-cells and hence causing their proliferation. The sequence is that of Keratin, type I cytoskeletal 17 from Bos taurus (Bovine).